The following is a 499-amino-acid chain: Serine/threonine-protein kinase RHS3 (499 aa).

The interval 1–92 (MLLKPGNKLV…NSSKPHTGGD (92 aa)) is disordered. Residues 39–55 (QKQVEQNTKKIEEHQIK) are compositionally biased toward basic and acidic residues. The segment covering 63–85 (SNHNVNMSSQSNNSESTSTNNSS) has biased composition (low complexity). One can recognise a Protein kinase domain in the interval 113 to 436 (FRVLKRLGYG…ATEIKQHPFF (324 aa)). Residues 119–127 (LGYGDIGSV) and Lys144 each bind ATP. Asp240 functions as the Proton acceptor in the catalytic mechanism. The AGC-kinase C-terminal domain occupies 437–499 (EGVNWALIRG…DPDYIVFEYF (63 aa)).

The protein belongs to the protein kinase superfamily. AGC Ser/Thr protein kinase family. Interacts with PDPK1/PDK1. In terms of processing, autophosphorylated and phosphorylated by PDPK1/PDK1. Specifically expressed in root hair cells.

The enzyme catalyses L-seryl-[protein] + ATP = O-phospho-L-seryl-[protein] + ADP + H(+). It carries out the reaction L-threonyl-[protein] + ATP = O-phospho-L-threonyl-[protein] + ADP + H(+). Activated by PDPK1/PDK1. Involved in root hair growth and morphogenesis. The protein is Serine/threonine-protein kinase RHS3 of Arabidopsis thaliana (Mouse-ear cress).